We begin with the raw amino-acid sequence, 949 residues long: Bifunctional uridylyltransferase/uridylyl-removing enzyme (949 aa).

The segment at Met1–Ser37 is disordered. The uridylyltransferase stretch occupies residues Met1–Pro395. Positions Gly396 to Thr756 are uridylyl-removing. Residues Val516 to Pro632 form the HD domain. 2 consecutive ACT domains span residues Glu757–Arg834 and Val870–Ser949.

This sequence belongs to the GlnD family. The cofactor is Mg(2+).

It catalyses the reaction [protein-PII]-L-tyrosine + UTP = [protein-PII]-uridylyl-L-tyrosine + diphosphate. It carries out the reaction [protein-PII]-uridylyl-L-tyrosine + H2O = [protein-PII]-L-tyrosine + UMP + H(+). Uridylyltransferase (UTase) activity is inhibited by glutamine, while glutamine activates uridylyl-removing (UR) activity. Functionally, modifies, by uridylylation and deuridylylation, the PII regulatory proteins (GlnB and homologs), in response to the nitrogen status of the cell that GlnD senses through the glutamine level. Under low glutamine levels, catalyzes the conversion of the PII proteins and UTP to PII-UMP and PPi, while under higher glutamine levels, GlnD hydrolyzes PII-UMP to PII and UMP (deuridylylation). Thus, controls uridylylation state and activity of the PII proteins, and plays an important role in the regulation of nitrogen assimilation and metabolism. The sequence is that of Bifunctional uridylyltransferase/uridylyl-removing enzyme from Gluconobacter oxydans (strain 621H) (Gluconobacter suboxydans).